The primary structure comprises 339 residues: uncharacterized protein (339 aa).

Residues 1–24 are disordered; sequence IQPARRHTKNTNMAKHTTKGTGHS. Positions 10–21 are enriched in polar residues; the sequence is NTNMAKHTTKGT.

Its subcellular location is the mitochondrion. This is an uncharacterized protein from Zea mays (Maize).